Reading from the N-terminus, the 390-residue chain is Delta-aminolevulinic acid dehydratase, chloroplastic (390 aa).

Residues 1-24 (MQMMQRNVVGQRPVAGSRRSLVVA) constitute a chloroplast transit peptide. Residues 34–69 (VSTNGKHRTGVPEGTPIVTPQDLPSRPRRNRRSESF) form a disordered region. K251 serves as the catalytic Schiff-base intermediate with substrate. 5-aminolevulinate is bound by residues R261 and K281. A Mg(2+)-binding site is contributed by E297. Catalysis depends on K312, which acts as the Schiff-base intermediate with substrate. Residues S338 and Y377 each contribute to the 5-aminolevulinate site.

This sequence belongs to the ALAD family. As to quaternary structure, homooctamer. The cofactor is Mg(2+).

It is found in the plastid. The protein localises to the chloroplast. The enzyme catalyses 2 5-aminolevulinate = porphobilinogen + 2 H2O + H(+). The protein operates within porphyrin-containing compound metabolism; protoporphyrin-IX biosynthesis; coproporphyrinogen-III from 5-aminolevulinate: step 1/4. Catalyzes an early step in the biosynthesis of tetrapyrroles. Binds two molecules of 5-aminolevulinate per subunit, each at a distinct site, and catalyzes their condensation to form porphobilinogen. The sequence is that of Delta-aminolevulinic acid dehydratase, chloroplastic (HEMB) from Chlamydomonas reinhardtii (Chlamydomonas smithii).